A 542-amino-acid polypeptide reads, in one-letter code: GMP synthase [glutamine-hydrolyzing] (542 aa).

Positions 28–218 constitute a Glutamine amidotransferase type-1 domain; that stretch reads MIVILDFGSQ…VYHICECEPT (191 aa). Cys-105 acts as the Nucleophile in catalysis. Catalysis depends on residues His-192 and Glu-194. Positions 219 to 417 constitute a GMPS ATP-PPase domain; that stretch reads WTTEAFVDET…IGLPEEIVRR (199 aa). An ATP-binding site is contributed by 246–252; sequence SGGVDSS.

In terms of assembly, homodimer.

It catalyses the reaction XMP + L-glutamine + ATP + H2O = GMP + L-glutamate + AMP + diphosphate + 2 H(+). The protein operates within purine metabolism; GMP biosynthesis; GMP from XMP (L-Gln route): step 1/1. Functionally, catalyzes the synthesis of GMP from XMP. This is GMP synthase [glutamine-hydrolyzing] from Crocosphaera subtropica (strain ATCC 51142 / BH68) (Cyanothece sp. (strain ATCC 51142)).